Reading from the N-terminus, the 144-residue chain is Large ribosomal subunit protein uL15 (144 aa).

The interval 1–56 (MELNTLAPAPGAKSSKKRVGRGIGSGLGKTGGRGHKGQKSRSGGSVKPGFEGGQMP) is disordered. A compositionally biased stretch (gly residues) spans 21 to 31 (RGIGSGLGKTG).

It belongs to the universal ribosomal protein uL15 family. As to quaternary structure, part of the 50S ribosomal subunit.

In terms of biological role, binds to the 23S rRNA. This is Large ribosomal subunit protein uL15 from Idiomarina loihiensis (strain ATCC BAA-735 / DSM 15497 / L2-TR).